Reading from the N-terminus, the 143-residue chain is Large ribosomal subunit protein uL13 (143 aa).

Belongs to the universal ribosomal protein uL13 family. Part of the 50S ribosomal subunit.

This protein is one of the early assembly proteins of the 50S ribosomal subunit, although it is not seen to bind rRNA by itself. It is important during the early stages of 50S assembly. This is Large ribosomal subunit protein uL13 from Neisseria gonorrhoeae (strain ATCC 700825 / FA 1090).